Consider the following 476-residue polypeptide: Ribulose bisphosphate carboxylase large chain (476 aa).

Positions methionine 1–serine 2 are excised as a propeptide. Position 3 is an N-acetylproline (proline 3). N6,N6,N6-trimethyllysine is present on lysine 14. The substrate site is built by asparagine 123 and threonine 173. Lysine 175 (proton acceptor) is an active-site residue. Lysine 177 provides a ligand contact to substrate. Positions 201, 203, and 204 each coordinate Mg(2+). Lysine 201 bears the N6-carboxylysine mark. Substrate-binding residues include arginine 295, histidine 327, and serine 379.

The protein belongs to the RuBisCO large chain family. Type I subfamily. In terms of assembly, heterohexadecamer of 8 large chains and 8 small chains; disulfide-linked. The disulfide link is formed within the large subunit homodimers. Mg(2+) serves as cofactor. In terms of processing, the disulfide bond which can form in the large chain dimeric partners within the hexadecamer appears to be associated with oxidative stress and protein turnover.

The protein resides in the plastid. It is found in the chloroplast. It carries out the reaction 2 (2R)-3-phosphoglycerate + 2 H(+) = D-ribulose 1,5-bisphosphate + CO2 + H2O. The catalysed reaction is D-ribulose 1,5-bisphosphate + O2 = 2-phosphoglycolate + (2R)-3-phosphoglycerate + 2 H(+). Its function is as follows. RuBisCO catalyzes two reactions: the carboxylation of D-ribulose 1,5-bisphosphate, the primary event in carbon dioxide fixation, as well as the oxidative fragmentation of the pentose substrate in the photorespiration process. Both reactions occur simultaneously and in competition at the same active site. This is Ribulose bisphosphate carboxylase large chain from Barnadesia caryophylla (Xenophontia caryophylla).